The sequence spans 398 residues: 4-hydroxy-3-methylbut-2-en-1-yl diphosphate synthase (ferredoxin) (398 aa).

4 residues coordinate [4Fe-4S] cluster: Cys-306, Cys-309, Cys-340, and Glu-347.

The protein belongs to the IspG family. The cofactor is [4Fe-4S] cluster.

The catalysed reaction is (2E)-4-hydroxy-3-methylbut-2-enyl diphosphate + 2 oxidized [2Fe-2S]-[ferredoxin] + H2O = 2-C-methyl-D-erythritol 2,4-cyclic diphosphate + 2 reduced [2Fe-2S]-[ferredoxin] + H(+). It functions in the pathway isoprenoid biosynthesis; isopentenyl diphosphate biosynthesis via DXP pathway; isopentenyl diphosphate from 1-deoxy-D-xylulose 5-phosphate: step 5/6. Functionally, converts 2C-methyl-D-erythritol 2,4-cyclodiphosphate (ME-2,4cPP) into 1-hydroxy-2-methyl-2-(E)-butenyl 4-diphosphate. This chain is 4-hydroxy-3-methylbut-2-en-1-yl diphosphate synthase (ferredoxin), found in Parasynechococcus marenigrum (strain WH8102).